A 1408-amino-acid chain; its full sequence is DNA-directed RNA polymerase subunit beta (1408 aa).

A disordered region spans residues 1383-1408; it reads PERQRSFGGDFLGGGDGEERKTGTEA. A compositionally biased stretch (basic and acidic residues) spans 1399-1408; it reads GEERKTGTEA.

This sequence belongs to the RNA polymerase beta chain family. The RNAP catalytic core consists of 2 alpha, 1 beta, 1 beta' and 1 omega subunit. When a sigma factor is associated with the core the holoenzyme is formed, which can initiate transcription.

The enzyme catalyses RNA(n) + a ribonucleoside 5'-triphosphate = RNA(n+1) + diphosphate. Functionally, DNA-dependent RNA polymerase catalyzes the transcription of DNA into RNA using the four ribonucleoside triphosphates as substrates. This Myxococcus xanthus (strain DK1622) protein is DNA-directed RNA polymerase subunit beta.